The chain runs to 81 residues: Costars family protein ABRACL (81 aa).

The protein belongs to the costars family.

In Salmo salar (Atlantic salmon), this protein is Costars family protein ABRACL.